The following is a 289-amino-acid chain: UPF0761 membrane protein ESA_04062 (289 aa).

A run of 6 helical transmembrane segments spans residues 44–64 (LLSLVPFVAVIFALFAAFPMF), 104–124 (VGALGLIVTSLLLMYAIDSAL), 140–160 (FAVYWMILTLGPLLAGASLVI), 183–203 (IFPLLLSWLSFWLLYSVVPTT), 215–235 (LVAALLFELGKKGFALYITMF), and 244–264 (VLAVIPILFLWVYWTWCIVLL).

It belongs to the UPF0761 family.

The protein localises to the cell inner membrane. The protein is UPF0761 membrane protein ESA_04062 of Cronobacter sakazakii (strain ATCC BAA-894) (Enterobacter sakazakii).